The chain runs to 531 residues: Glucose-6-phosphate exchanger SLC37A1 (531 aa).

A helical transmembrane segment spans residues glutamine 18–serine 38. The tract at residues cysteine 53–histidine 72 is disordered. 11 helical membrane-spanning segments follow: residues glycine 100–isoleucine 120, tyrosine 129–phenylalanine 149, phenylalanine 157–valine 177, isoleucine 192–tryptophan 214, serine 222–isoleucine 242, leucine 332–isoleucine 352, glycine 364–isoleucine 384, alanine 392–valine 412, alanine 419–threonine 439, alanine 464–isoleucine 484, and glycine 488–valine 508.

The protein belongs to the major facilitator superfamily. Organophosphate:Pi antiporter (OPA) (TC 2.A.1.4) family.

It is found in the endoplasmic reticulum membrane. The catalysed reaction is D-glucose 6-phosphate(in) + phosphate(out) = D-glucose 6-phosphate(out) + phosphate(in). Inhibited by vanadate but not by chlorogenic acid. Inorganic phosphate and glucose-6-phosphate antiporter. May transport cytoplasmic glucose-6-phosphate into the lumen of the endoplasmic reticulum and translocate inorganic phosphate into the opposite direction. Independent of a lumenal glucose-6-phosphatase. May not play a role in homeostatic regulation of blood glucose levels. This Mus musculus (Mouse) protein is Glucose-6-phosphate exchanger SLC37A1.